The sequence spans 749 residues: Catalase-peroxidase (749 aa).

The span at 1–12 shows a compositional bias: basic and acidic residues; that stretch reads MSSDTSDTRPPH. The disordered stretch occupies residues 1 to 40; it reads MSSDTSDTRPPHSDSGTQSNSESENPIIDSPEPKAHAPLT. Residues 14–24 show a composition bias toward polar residues; the sequence is DSGTQSNSESE. The segment at residues 113 to 240 is a cross-link (tryptophyl-tyrosyl-methioninium (Trp-Tyr) (with M-266)); sequence WHAAGTYRIF…FGATTMGLIY (128 aa). The Proton acceptor role is filled by His-114. The segment at residues 240 to 266 is a cross-link (tryptophyl-tyrosyl-methioninium (Tyr-Met) (with W-113)); sequence YVNPEGPEGKPDPLAAAHDIRETFGRM. His-281 contributes to the heme b binding site.

This sequence belongs to the peroxidase family. Peroxidase/catalase subfamily. Homodimer or homotetramer. It depends on heme b as a cofactor. In terms of processing, formation of the three residue Trp-Tyr-Met cross-link is important for the catalase, but not the peroxidase activity of the enzyme.

It carries out the reaction H2O2 + AH2 = A + 2 H2O. The catalysed reaction is 2 H2O2 = O2 + 2 H2O. Bifunctional enzyme with both catalase and broad-spectrum peroxidase activity. The chain is Catalase-peroxidase from Mycobacterium sp. (strain JLS).